A 234-amino-acid chain; its full sequence is Leucyl/phenylalanyl-tRNA--protein transferase (234 aa).

Belongs to the L/F-transferase family.

The protein localises to the cytoplasm. The enzyme catalyses N-terminal L-lysyl-[protein] + L-leucyl-tRNA(Leu) = N-terminal L-leucyl-L-lysyl-[protein] + tRNA(Leu) + H(+). The catalysed reaction is N-terminal L-arginyl-[protein] + L-leucyl-tRNA(Leu) = N-terminal L-leucyl-L-arginyl-[protein] + tRNA(Leu) + H(+). It catalyses the reaction L-phenylalanyl-tRNA(Phe) + an N-terminal L-alpha-aminoacyl-[protein] = an N-terminal L-phenylalanyl-L-alpha-aminoacyl-[protein] + tRNA(Phe). Functions in the N-end rule pathway of protein degradation where it conjugates Leu, Phe and, less efficiently, Met from aminoacyl-tRNAs to the N-termini of proteins containing an N-terminal arginine or lysine. The protein is Leucyl/phenylalanyl-tRNA--protein transferase of Nitratidesulfovibrio vulgaris (strain ATCC 29579 / DSM 644 / CCUG 34227 / NCIMB 8303 / VKM B-1760 / Hildenborough) (Desulfovibrio vulgaris).